Here is a 58-residue protein sequence, read N- to C-terminus: Ribosome modulation factor (58 aa).

Basic residues predominate over residues 1–14 (MKRQKRDKLTRAHS). Positions 1-25 (MKRQKRDKLTRAHSKGYQAGISGRS) are disordered.

Belongs to the ribosome modulation factor family.

Its subcellular location is the cytoplasm. During stationary phase, converts 70S ribosomes to an inactive dimeric form (100S ribosomes). This is Ribosome modulation factor from Alteromonas naphthalenivorans.